Reading from the N-terminus, the 246-residue chain is UDP-N-acetyl-D-mannosaminuronic acid transferase (246 aa).

The protein belongs to the glycosyltransferase 26 family.

The catalysed reaction is UDP-N-acetyl-alpha-D-mannosaminouronate + N-acetyl-alpha-D-glucosaminyl-di-trans,octa-cis-undecaprenyl diphosphate = beta-D-ManNAcA-(1-&gt;4)-alpha-D-GlcNAc-di-trans,octa-cis-undecaprenyl diphosphate + UDP + H(+). It functions in the pathway bacterial outer membrane biogenesis; enterobacterial common antigen biosynthesis. Functionally, catalyzes the synthesis of Und-PP-GlcNAc-ManNAcA (Lipid II), the second lipid-linked intermediate involved in enterobacterial common antigen (ECA) synthesis. The sequence is that of UDP-N-acetyl-D-mannosaminuronic acid transferase from Escherichia coli O127:H6 (strain E2348/69 / EPEC).